Here is a 464-residue protein sequence, read N- to C-terminus: GTPase Der (464 aa).

EngA-type G domains follow at residues 3–166 (PVIA…PEVE) and 178–351 (IRIA…DSAF). GTP-binding positions include 9-16 (GRPNVGKS), 56-60 (DTGGL), 118-121 (NKTD), 184-191 (GRPNAGKS), 231-235 (DTAGV), and 296-299 (NKWD). In terms of domain architecture, KH-like spans 352–436 (IKVSTNHLTK…PIRLEFKTGE (85 aa)).

Belongs to the TRAFAC class TrmE-Era-EngA-EngB-Septin-like GTPase superfamily. EngA (Der) GTPase family. Associates with the 50S ribosomal subunit.

Functionally, GTPase that plays an essential role in the late steps of ribosome biogenesis. This is GTPase Der from Thioalkalivibrio sulfidiphilus (strain HL-EbGR7).